The sequence spans 472 residues: MSIGAEIDSLVPAPPGLNGTAAGYPAKTQKELSNGDFDAHDGLSLAQLTPYDVLTAALPLPAPASSTGFWWRETGPVMSKLLAKANYPLYTHYKYLMLYHTHILPLLGPRPPLENSTHPSPSNAPWRSFLTDDFTPLEPSWNVNGNSEAQSTIRLGIEPIGFEAGAAADPFNQAAVTQFMHSYEATEVGATLTLFEHFRNDMFVGPETYAALRAKIPEGEHTTQSFLAFDLDAGRVTTKAYFFPILMSLKTGQSTTKVVSDSILHLALKSEVWGVQTIAAMSVMEAWIGSYGGAAKTEMISVDCVNEADSRIKIYVRMPHTSLRKVKEAYCLGGRLTDENTKEGLKLLDELWRTVFGIDDEDAELPQNSHRTAGTIFNFELRPGKWFPEPKVYLPVRHYCESDMQIASRLQTFFGRLGWHNMEKDYCKHLEDLFPHHPLSSSTGTHTFLSFSYKKQKGVYMTMYYNLRVYST.

Glu138 contacts L-tryptophan. The dimethylallyl diphosphate site is built by Arg154, Lys239, Tyr241, Lys313, Tyr315, Tyr393, Tyr460, and Tyr464.

The protein belongs to the tryptophan dimethylallyltransferase family. As to quaternary structure, homodimer.

The enzyme catalyses L-tryptophan + dimethylallyl diphosphate = 7-(3-methylbut-2-enyl)-L-tryptophan + diphosphate. It carries out the reaction an N-terminal L-tryptophanyl-L-alpha-aminoacyl-[peptide] + H2O = an N-terminal L-alpha-aminoacyl-[peptide] + L-tryptophan. Its pathway is secondary metabolite biosynthesis. 7-dimethylallyltryptophan synthase; part of the gene cluster that mediates the biosynthesis of hexadehydro-astechrome (HAS), a tryptophan-derived iron(III)-complex that acts as a virulence factor in infected mice. Catalyzes the prenylation of L-tryptophan at the C-7 position of the indole moiety. The enzyme is specific for dimethylallyl diphosphate (DMAPP) as prenyl donor. Also accepts D-tryptophan, typtophan-derivatives with modifications at the side chain or the indole ring, and linear and cyclic dipeptides such as H-L-Trp-L-Gly-OH or cyclo-L-Trp-L-Gly as substrates, however with lower efficiency. Also has tryptophan aminopeptidase activity towards linear peptides with a tryptophanyl moiety at the N-terminus. Dipeptides are better substrates than peptides with 3 or more amino acids. Enzymatic rate constants however are much higher for the prenyltransferase activity than for the aminopeptidase activity. Within the hexadehydro-astechrome biosyntetic pathway, hasE catalyzes the prenylation of the hasD-tethered tryptophan or the resulting tethered Trp-Ala dipeptid. The HAS biosynthesis begins with the synthesis of a tethered Trp-Ala dipeptide by the NRPS hasD. The 7-dimethylallyltryptophan synthase hasE then catalyzes the prenylation of the hasD-tethered tryptophan or the resulting tethered Trp-Ala dipeptide at the C-7 position of the indole moiety. HAS biosynthesis continues via tethered intermediates with the succesive actions of the cytochrome P450 monooxygenase hasH, the O-methyltransferase hasC, and the FAD-linked oxidoreductase hasG. The resulting O-methylated diketopiperazine is then released from hasD. Finally, three O-methylated diketopiperazine molecules assemble in a trimeric complex with Fe(III) to produce hexadehydro-astechrome. This chain is 7-dimethylallyltryptophan synthase hasE, found in Aspergillus fumigatus (strain CBS 144.89 / FGSC A1163 / CEA10) (Neosartorya fumigata).